Reading from the N-terminus, the 293-residue chain is Beta-porphyranase B (293 aa).

Residues 1–21 (MKLSNQFLITITLLITSITFA) form the signal peptide. A GH16 domain is found at 38–291 (QEWKLIENMS…WVRSWQLVDS (254 aa)). Substrate is bound by residues tryptophan 67, arginine 70, glutamate 156, glutamate 161, and glutamate 256. The Nucleophile role is filled by glutamate 156. Glutamate 161 functions as the Proton donor in the catalytic mechanism.

The protein belongs to the glycosyl hydrolase 16 family.

It is found in the periplasm. It carries out the reaction Hydrolysis of beta-D-galactopyranose-(1-&gt;4)-alpha-L-galactopyranose-6-sulfate linkages in porphyran.. Functionally, cleaves the sulfated polysaccharide porphyran at the (1-&gt;4) linkages between beta-D-galactopyranose and alpha-L-galactopyranose-6-sulfate, forming mostly the disaccharide alpha-L-galactopyranose-6-sulfate-(1-&gt;3)-beta-D-galactose. Some longer oligosaccharides of even number of residues are also observed. Inactive on the non-sulfated agarose portion of the porphyran backbone. In contrast to PorA, tolerates the presence of 3-6-anhydro-L-galactose in subsite -2. The sequence is that of Beta-porphyranase B (porB) from Zobellia galactanivorans (strain DSM 12802 / CCUG 47099 / CIP 106680 / NCIMB 13871 / Dsij).